The sequence spans 292 residues: MDKVKIALQYMLPKHLLSRLVGKLAASEAGALTTAAIKWFIKQYKIDMSEAAQSEPEAYKSFNDFFTRALKPGIRPINTAANIMVHPVDGAVSQLGPIKDGRIFQAKGHHYSSLTLLGDQAEDAKRFEGGDFATIYLAPKDYHRIHMPIKGTLSKMTYVPGELFSVNPLTARHVPGLFARNERVVAIFETELGPLAMVLVGATIVASIETVWAGTITPPTGKQVFTWEYPTVGPDAITLDKGEEMGRFKLGSTVVMLFAKDAIDTFAEGVEPEAVTRMGQAFANLKNQASAD.

Residues Asp-89, His-146, and Ser-252 each act as charge relay system; for autoendoproteolytic cleavage activity in the active site. Ser-252 (schiff-base intermediate with substrate; via pyruvic acid; for decarboxylase activity) is an active-site residue. At Ser-252 the chain carries Pyruvic acid (Ser); by autocatalysis.

Belongs to the phosphatidylserine decarboxylase family. PSD-B subfamily. Prokaryotic type I sub-subfamily. Heterodimer of a large membrane-associated beta subunit and a small pyruvoyl-containing alpha subunit. Requires pyruvate as cofactor. Post-translationally, is synthesized initially as an inactive proenzyme. Formation of the active enzyme involves a self-maturation process in which the active site pyruvoyl group is generated from an internal serine residue via an autocatalytic post-translational modification. Two non-identical subunits are generated from the proenzyme in this reaction, and the pyruvate is formed at the N-terminus of the alpha chain, which is derived from the carboxyl end of the proenzyme. The autoendoproteolytic cleavage occurs by a canonical serine protease mechanism, in which the side chain hydroxyl group of the serine supplies its oxygen atom to form the C-terminus of the beta chain, while the remainder of the serine residue undergoes an oxidative deamination to produce ammonia and the pyruvoyl prosthetic group on the alpha chain. During this reaction, the Ser that is part of the protease active site of the proenzyme becomes the pyruvoyl prosthetic group, which constitutes an essential element of the active site of the mature decarboxylase.

It localises to the cell membrane. It catalyses the reaction a 1,2-diacyl-sn-glycero-3-phospho-L-serine + H(+) = a 1,2-diacyl-sn-glycero-3-phosphoethanolamine + CO2. It functions in the pathway phospholipid metabolism; phosphatidylethanolamine biosynthesis; phosphatidylethanolamine from CDP-diacylglycerol: step 2/2. Its function is as follows. Catalyzes the formation of phosphatidylethanolamine (PtdEtn) from phosphatidylserine (PtdSer). In Shewanella sp. (strain MR-7), this protein is Phosphatidylserine decarboxylase proenzyme.